The primary structure comprises 639 residues: Far upstream element-binding protein 1 (639 aa).

Disordered stretches follow at residues 1–27 (MADY…NDAF) and 40–88 (KIGG…LPPM). An N-acetylalanine modification is found at alanine 2. Residues 14-23 (SAGGGGGGGV) are compositionally biased toward gly residues. 2 positions are modified to phosphoserine: serine 48 and serine 51. Positions 61–73 (RPLEDGDQPDAKK) are enriched in basic and acidic residues. 3 KH domains span residues 95–159 (VMTE…KRLL), 180–246 (NAVQ…KEMV), and 270–334 (NEGI…AEII). Serine 135 is modified (phosphoserine). Threonine 148 is subject to Phosphothreonine. 4 positions are modified to omega-N-methylarginine: arginine 316, arginine 354, arginine 356, and arginine 358. Residues 341 to 360 (VQAGNPGGPGPGGRGRGRGQ) are disordered. A compositionally biased stretch (gly residues) spans 345 to 360 (NPGGPGPGGRGRGRGQ). A KH 4 domain is found at 371–438 (LQEFNFIVPT…QQIDYARQLI (68 aa)). Threonine 427 carries the phosphothreonine modification. Disordered stretches follow at residues 442–527 (IGGP…GTDP) and 543–574 (QAQP…PAGQ). Over residues 463–500 (PHGPPGPPGPGTPMGPYNPAPYNPGPPGPAPHGPPAPY) the composition is skewed to pro residues. Positions 551–568 (PAGAPTTTQTNGQGDQQN) are enriched in low complexity. Serine 625 bears the Phosphoserine mark.

In terms of assembly, found in a complex with PUF60 and far upstream element (FUSE) DNA segment. Interacts with PUF60 and JTV1. Ubiquitinated. This targets the protein for proteasome-mediated degradation.

It is found in the nucleus. Regulates MYC expression by binding to a single-stranded far-upstream element (FUSE) upstream of the MYC promoter. May act both as activator and repressor of transcription. The polypeptide is Far upstream element-binding protein 1 (Rattus norvegicus (Rat)).